A 665-amino-acid chain; its full sequence is Dual specificity protein phosphatase 16 (665 aa).

A Rhodanese domain is found at 22 to 137 (GTEKVLLIDS…FSRCFPGLCE (116 aa)). Lys-55 carries the (Microbial infection) N6-acetyllysine; by EIS modification. The Tyrosine-protein phosphatase domain occupies 158–300 (GPTRILPNLY…LLDYEKKIKN (143 aa)). Cys-244 serves as the catalytic Phosphocysteine intermediate. Positions 321–368 (EPVPAVSEGGQKSETPLSPPCADSATSEAAGQRPVHPASVPSVPSVQP) are disordered. Residues 354 to 368 (PVHPASVPSVPSVQP) show a composition bias toward low complexity. Ser-446 carries the post-translational modification Phosphoserine; by MAPK1. Composition is skewed to polar residues over residues 449-458 (QELSEQTPET) and 487-499 (VRTS…QRSL). 2 disordered regions span residues 449–505 (QELS…PLHR) and 597–665 (VRRR…IEVS). Ser-501 is subject to Phosphoserine. The span at 602–622 (KPSDRADSRRSWHEESPFEKQ) shows a compositional bias: basic and acidic residues.

It belongs to the protein-tyrosine phosphatase family. Non-receptor class dual specificity subfamily. Interacts with ARRB2. In terms of processing, phosphorylated at Ser-446 by MAPK1/ERK2, which prevents its degradation, and thereby stabilizes it and blocks JNK MAPK activity. (Microbial infection) Acetylated at Lys-55 by the M.tuberculosis Eis protein; this leads to the inhibition of JNK-dependent autophagy, phagosome maturation, and ROS (reactive oxygen species) generation for enhanced intracellular survival of M.tuberculosis.

It is found in the cytoplasm. Its subcellular location is the nucleus. The protein localises to the cytoplasmic vesicle. It carries out the reaction O-phospho-L-tyrosyl-[protein] + H2O = L-tyrosyl-[protein] + phosphate. The catalysed reaction is O-phospho-L-seryl-[protein] + H2O = L-seryl-[protein] + phosphate. The enzyme catalyses O-phospho-L-threonyl-[protein] + H2O = L-threonyl-[protein] + phosphate. Functionally, dual specificity protein phosphatase involved in the inactivation of MAP kinases. Dephosphorylates MAPK10 bound to ARRB2. In Homo sapiens (Human), this protein is Dual specificity protein phosphatase 16 (DUSP16).